The chain runs to 258 residues: Large ribosomal subunit protein uL3 (258 aa).

It belongs to the universal ribosomal protein uL3 family. In terms of assembly, part of the 50S ribosomal subunit. Forms a cluster with proteins L14 and L19.

In terms of biological role, one of the primary rRNA binding proteins, it binds directly near the 3'-end of the 23S rRNA, where it nucleates assembly of the 50S subunit. The sequence is that of Large ribosomal subunit protein uL3 from Spiroplasma kunkelii.